We begin with the raw amino-acid sequence, 512 residues long: Ribonuclease Y (512 aa).

The chain crosses the membrane as a helical span at residues 3–23 (FQIILVVIISALVGLVIGFFI). Positions 202–265 (TVAVIPLPND…EVARLALERL (64 aa)) constitute a KH domain. The HD domain occupies 328–421 (VLKHSIEVCH…VQAADAISAA (94 aa)).

The protein belongs to the RNase Y family.

The protein resides in the cell membrane. Endoribonuclease that initiates mRNA decay. The protein is Ribonuclease Y of Desulforamulus reducens (strain ATCC BAA-1160 / DSM 100696 / MI-1) (Desulfotomaculum reducens).